We begin with the raw amino-acid sequence, 366 residues long: MWPLSHRHLCLAFLLVCVLSAISFFLHIHQDSFRHGLSLSVLCPDRHLVTPPVAIFCLPGSPMSPNASSPRPQHPASLSGTWTIYPDGRFGNQMGQYATLLALAQLNGRRAFILPSMHAALAPVFRITLPVLAPEVDSRTPWRELRLHDWMSEEYADLGDPFLKLSGFPCSWTFFHHLREQIRSEFTLHDHLRQEAQSVLGRLRLGRSGDRPRTFVGVHVRRGDYLQVMPQRWKGVVGNSAYLRQAMDWFRARHEAPVFVVTSNGMEWCRENIDASKGDVMFAGDGQEASPWKDFALLTQCNHTIMTIGTFGFWAAYLAGGDTVYLANFTLPDSEFLKIFKPEAAFLPEWVGINADLSPLWTLAEP.

The Cytoplasmic portion of the chain corresponds to 1-8 (MWPLSHRH). Residues 9–25 (LCLAFLLVCVLSAISFF) traverse the membrane as a helical; Signal-anchor for type II membrane protein segment. Topologically, residues 26 to 366 (LHIHQDSFRH…LSPLWTLAEP (341 aa)) are lumenal. Asparagine 66, asparagine 302, and asparagine 328 each carry an N-linked (GlcNAc...) asparagine glycan.

It belongs to the glycosyltransferase 11 family.

The protein resides in the golgi apparatus. It is found in the golgi stack membrane. The enzyme catalyses a beta-D-galactosyl-(1-&gt;4)-N-acetyl-beta-D-glucosaminyl derivative + GDP-beta-L-fucose = an alpha-L-Fuc-(1-&gt;2)-beta-D-Gal-(1-&gt;4)-beta-D-GlcNAc derivative + GDP + H(+). It carries out the reaction a ganglioside GA1 + GDP-beta-L-fucose = a ganglioside Fuc-GA1 + GDP + H(+). The catalysed reaction is a beta-D-Gal-(1-&gt;3)-beta-D-GlcNAc-(1-&gt;3)-beta-D-Gal-(1-&gt;4)-beta-D-Glc-(1&lt;-&gt;1')-Cer(d18:1(4E)) + GDP-beta-L-fucose = alpha-L-fucosyl-(1-&gt;2)- beta-D-galactosyl-(1-&gt;3)-N-acetyl-beta-D-glucosaminyl-(1-&gt;3)-beta-D-galactosyl-(1-&gt;4)-beta-D-glucosyl-(1&lt;-&gt;1')-N-acylsphing-4-enine + GDP + H(+). It catalyses the reaction a neolactoside nLc4Cer(d18:1(4E)) + GDP-beta-L-fucose = a neolactoside IV(2)-alpha-Fuc-nLc4Cer(d18:1(4E)) + GDP + H(+). The enzyme catalyses a ganglioside GM1 + GDP-beta-L-fucose = a ganglioside Fuc-GM1 + GDP + H(+). It carries out the reaction beta-D-galactosyl-(1-&gt;3)-N-acetyl-D-galactosamine + GDP-beta-L-fucose = alpha-L-fucosyl-(1-&gt;2)-beta-D-galactosyl-(1-&gt;3)-N-acetyl-D-galactosamine + GDP + H(+). Its pathway is protein modification; protein glycosylation. Catalyzes the transfer of L-fucose, from a guanosine diphosphate-beta-L-fucose, to the terminal galactose residue of glycoconjugates through an alpha(1,2) linkage leading to H antigen synthesis that is an intermediate substrate in the synthesis of ABO blood group antigens. H antigen is essential for maturation of the glomerular layer of the main olfactory bulb, in cell migration and early cell-cell contacts during tumor associated angiogenesis. Preferentially fucosylates soluble lactose and to a lesser extent fucosylates glycolipids gangliosides GA1 and GM1a. This is Galactoside alpha-(1,2)-fucosyltransferase 1 from Plecturocebus brunneus (Brown titi monkey).